Consider the following 183-residue polypeptide: Cyanate hydratase (183 aa).

Active-site residues include R118, E121, and S144.

Belongs to the cyanase family.

It carries out the reaction cyanate + hydrogencarbonate + 3 H(+) = NH4(+) + 2 CO2. Its function is as follows. Catalyzes the reaction of cyanate with bicarbonate to produce ammonia and carbon dioxide. This chain is Cyanate hydratase, found in Cryptococcus neoformans var. neoformans serotype D (strain B-3501A) (Filobasidiella neoformans).